The chain runs to 101 residues: Large ribosomal subunit protein bL21 (101 aa).

This sequence belongs to the bacterial ribosomal protein bL21 family. Part of the 50S ribosomal subunit. Contacts protein L20.

In terms of biological role, this protein binds to 23S rRNA in the presence of protein L20. The protein is Large ribosomal subunit protein bL21 of Corynebacterium aurimucosum (strain ATCC 700975 / DSM 44827 / CIP 107346 / CN-1) (Corynebacterium nigricans).